Here is a 1395-residue protein sequence, read N- to C-terminus: DNA-directed RNA polymerase subunit beta' (1395 aa).

Zn(2+) is bound by residues Cys70, Cys72, Cys85, and Cys88. Mg(2+) is bound by residues Asp460, Asp462, and Asp464. Residues Cys814, Cys888, Cys895, and Cys898 each coordinate Zn(2+).

Belongs to the RNA polymerase beta' chain family. In terms of assembly, the RNAP catalytic core consists of 2 alpha, 1 beta, 1 beta' and 1 omega subunit. When a sigma factor is associated with the core the holoenzyme is formed, which can initiate transcription. Requires Mg(2+) as cofactor. Zn(2+) is required as a cofactor.

It carries out the reaction RNA(n) + a ribonucleoside 5'-triphosphate = RNA(n+1) + diphosphate. Its function is as follows. DNA-dependent RNA polymerase catalyzes the transcription of DNA into RNA using the four ribonucleoside triphosphates as substrates. In Pseudoalteromonas atlantica (strain T6c / ATCC BAA-1087), this protein is DNA-directed RNA polymerase subunit beta'.